A 957-amino-acid chain; its full sequence is Glycine dehydrogenase (decarboxylating) (957 aa).

Lys-708 carries the post-translational modification N6-(pyridoxal phosphate)lysine.

The protein belongs to the GcvP family. The glycine cleavage system is composed of four proteins: P, T, L and H. Pyridoxal 5'-phosphate serves as cofactor.

The enzyme catalyses N(6)-[(R)-lipoyl]-L-lysyl-[glycine-cleavage complex H protein] + glycine + H(+) = N(6)-[(R)-S(8)-aminomethyldihydrolipoyl]-L-lysyl-[glycine-cleavage complex H protein] + CO2. In terms of biological role, the glycine cleavage system catalyzes the degradation of glycine. The P protein binds the alpha-amino group of glycine through its pyridoxal phosphate cofactor; CO(2) is released and the remaining methylamine moiety is then transferred to the lipoamide cofactor of the H protein. This is Glycine dehydrogenase (decarboxylating) from Klebsiella pneumoniae subsp. pneumoniae (strain ATCC 700721 / MGH 78578).